The following is a 299-amino-acid chain: MPT51/MPB51 antigen (299 aa).

Residues 1-26 form the signal peptide; the sequence is MKGRSALLRALWIAALSFGLGGVAVA.

Belongs to the mycobacterial A85 antigen family. Homodimer.

The protein resides in the secreted. May have a role in host tissue attachment, whereby ligands may include the serum protein fibronectin and small sugars. In Mycobacterium bovis (strain ATCC BAA-935 / AF2122/97), this protein is MPT51/MPB51 antigen (mpt51).